The primary structure comprises 501 residues: Aldehyde dehydrogenase 1A1 (501 aa).

Residue S2 is modified to N-acetylserine. N6-acetyllysine is present on residues K91 and K128. NAD(+) is bound by residues 167-170 (IPWN), 193-196 (KPAE), 226-227 (GP), and 246-247 (GS). At K252 the chain carries N6-acetyllysine. The Proton acceptor role is filled by E269. Position 269-271 (269-271 (ELG)) interacts with NAD(+). C303 functions as the Nucleophile in the catalytic mechanism. The segment at 336 to 501 (LTPGVSQGPQ…VTIKISQKNS (166 aa)) is mediates interaction with PRMT3. Residue T337 is modified to Phosphothreonine. An NAD(+)-binding site is contributed by 349 to 353 (EQYEK). N6-acetyllysine is present on residues K353 and K367. 400–402 (EIF) serves as a coordination point for NAD(+). K410 bears the N6-acetyllysine mark. Phosphoserine is present on S413. 2 positions are modified to N6-acetyllysine: K419 and K495.

The protein belongs to the aldehyde dehydrogenase family. Homotetramer. Interacts with PRMT3; the interaction is direct, inhibits ALDH1A1 aldehyde dehydrogenase activity and is independent of the methyltransferase activity of PRMT3. Post-translationally, the N-terminus is blocked most probably by acetylation.

Its subcellular location is the cytoplasm. The protein localises to the cytosol. It is found in the cell projection. It localises to the axon. The catalysed reaction is an aldehyde + NAD(+) + H2O = a carboxylate + NADH + 2 H(+). It carries out the reaction all-trans-retinal + NAD(+) + H2O = all-trans-retinoate + NADH + 2 H(+). The enzyme catalyses 9-cis-retinal + NAD(+) + H2O = 9-cis-retinoate + NADH + 2 H(+). It catalyses the reaction 11-cis-retinal + NAD(+) + H2O = 11-cis-retinoate + NADH + 2 H(+). The catalysed reaction is 13-cis-retinal + NAD(+) + H2O = 13-cis-retinoate + NADH + 2 H(+). It carries out the reaction 3-deoxyglucosone + NAD(+) + H2O = 2-dehydro-3-deoxy-D-gluconate + NADH + 2 H(+). The enzyme catalyses (E)-4-hydroxynon-2-enal + NAD(+) + H2O = (E)-4-hydroxynon-2-enoate + NADH + 2 H(+). It catalyses the reaction malonaldehyde + NAD(+) + H2O = 3-oxopropanoate + NADH + 2 H(+). The catalysed reaction is hexanal + NAD(+) + H2O = hexanoate + NADH + 2 H(+). It carries out the reaction propanal + NAD(+) + H2O = propanoate + NADH + 2 H(+). The enzyme catalyses acetaldehyde + NAD(+) + H2O = acetate + NADH + 2 H(+). It catalyses the reaction benzaldehyde + NAD(+) + H2O = benzoate + NADH + 2 H(+). The catalysed reaction is 4-aminobutanal + NAD(+) + H2O = 4-aminobutanoate + NADH + 2 H(+). The protein operates within cofactor metabolism; retinol metabolism. Inhibited by duocarmycin analogs. Functionally, cytosolic dehydrogenase that catalyzes the irreversible oxidation of a wide range of aldehydes to their corresponding carboxylic acid. Functions downstream of retinol dehydrogenases and catalyzes the oxidation of retinaldehyde into retinoic acid, the second step in the oxidation of retinol/vitamin A into retinoic acid. This pathway is crucial to control the levels of retinol and retinoic acid, two important molecules which excess can be teratogenic and cytotoxic. Also oxidizes aldehydes resulting from lipid peroxidation like (E)-4-hydroxynon-2-enal/HNE, malonaldehyde and hexanal that form protein adducts and are highly cytotoxic. By participating for instance to the clearance of (E)-4-hydroxynon-2-enal/HNE in the lens epithelium prevents the formation of HNE-protein adducts and lens opacification. Also functions downstream of fructosamine-3-kinase in the fructosamine degradation pathway by catalyzing the oxidation of 3-deoxyglucosone, the carbohydrate product of fructosamine 3-phosphate decomposition, which is itself a potent glycating agent that may react with lysine and arginine side-chains of proteins. Also has an aminobutyraldehyde dehydrogenase activity and is probably part of an alternative pathway for the biosynthesis of GABA/4-aminobutanoate in midbrain, thereby playing a role in GABAergic synaptic transmission. The polypeptide is Aldehyde dehydrogenase 1A1 (Ovis aries (Sheep)).